The primary structure comprises 349 residues: GDP-mannose:glycolipid 4-beta-D-mannosyltransferase (349 aa).

Positions 1–14 (MSASASLPVTRAAA) are cleaved as a signal peptide.

Belongs to the glycosyltransferase 94 family.

It localises to the cell inner membrane. It carries out the reaction beta-D-GlcA-(1-&gt;2)-alpha-D-Man-(1-&gt;3)-beta-D-Glc-(1-&gt;4)-alpha-D-Glc-di-trans,octa-cis-undecaprenyl diphosphate + GDP-alpha-D-mannose = beta-D-Man-(1-&gt;4)-beta-D-GlcA-(1-&gt;2)-alpha-D-Man-(1-&gt;3)-beta-D-Glc-(1-&gt;4)-alpha-D-Glc-di-trans,octa-cis-undecaprenyl diphosphate + GDP + H(+). Its pathway is glycan biosynthesis; xanthan biosynthesis. Functionally, nonprocessive beta-mannosyltransferase that catalyzes the transfer of a mannose residue from GDP-mannose to glucuronic acid-beta-1,2-mannose-alpha-1,3-glucose-beta-1,4-glucose-PP-polyisoprenyl to form the lipid-linked pentasaccharide repeating unit of xanthan, Man-GlcA-Man-Glc(2)-PP-Pol. Is involved in the biosynthesis of the exopolysaccharide xanthan. This Xanthomonas campestris pv. campestris (strain ATCC 33913 / DSM 3586 / NCPPB 528 / LMG 568 / P 25) protein is GDP-mannose:glycolipid 4-beta-D-mannosyltransferase (gumI).